Here is a 479-residue protein sequence, read N- to C-terminus: Adenosylhomocysteinase (479 aa).

Substrate is bound by residues Thr66, Asp142, and Glu203. Residue 204–206 participates in NAD(+) binding; it reads TTT. The substrate site is built by Lys233 and Asp237. Residues Asn238, 267 to 272, Glu290, Asn325, 346 to 348, and Asn394 each bind NAD(+); these read GYGDVG and IGH.

This sequence belongs to the adenosylhomocysteinase family. It depends on NAD(+) as a cofactor.

It localises to the cytoplasm. The enzyme catalyses S-adenosyl-L-homocysteine + H2O = L-homocysteine + adenosine. It functions in the pathway amino-acid biosynthesis; L-homocysteine biosynthesis; L-homocysteine from S-adenosyl-L-homocysteine: step 1/1. Functionally, may play a key role in the regulation of the intracellular concentration of adenosylhomocysteine. The polypeptide is Adenosylhomocysteinase (Oleidesulfovibrio alaskensis (strain ATCC BAA-1058 / DSM 17464 / G20) (Desulfovibrio alaskensis)).